A 120-amino-acid polypeptide reads, in one-letter code: Ribonuclease P protein component 2 (120 aa).

This sequence belongs to the eukaryotic/archaeal RNase P protein component 2 family. As to quaternary structure, consists of a catalytic RNA component and at least 4-5 protein subunits.

It localises to the cytoplasm. The catalysed reaction is Endonucleolytic cleavage of RNA, removing 5'-extranucleotides from tRNA precursor.. In terms of biological role, part of ribonuclease P, a protein complex that generates mature tRNA molecules by cleaving their 5'-ends. The polypeptide is Ribonuclease P protein component 2 (Methanobrevibacter smithii (strain ATCC 35061 / DSM 861 / OCM 144 / PS)).